Consider the following 95-residue polypeptide: Small ribosomal subunit protein bS6 (95 aa).

This sequence belongs to the bacterial ribosomal protein bS6 family.

Binds together with bS18 to 16S ribosomal RNA. This Bacillus pumilus (strain SAFR-032) protein is Small ribosomal subunit protein bS6.